Reading from the N-terminus, the 592-residue chain is Inactive heparanase-2 (592 aa).

An N-terminal signal peptide occupies residues 1–38; it reads MRVLCAFPEAMASSSSRPPSCLALVALFLALLLHLSLS. N254 and N392 each carry an N-linked (GlcNAc...) asparagine glycan.

This sequence belongs to the glycosyl hydrolase 79 family. In terms of assembly, interacts with HPSE. Interacts with SDC1 (via glycan chains).

The protein localises to the secreted. It localises to the extracellular space. The protein resides in the extracellular matrix. Functionally, binds heparin and heparan sulfate with high affinity, but lacks heparanase activity. Inhibits HPSE, possibly by competing for its substrates (in vitro). In Mus musculus (Mouse), this protein is Inactive heparanase-2 (Hpse2).